A 205-amino-acid chain; its full sequence is Adenylyl-sulfate kinase (205 aa).

31-38 (GLSGAGKS) lines the ATP pocket. Catalysis depends on Ser-105, which acts as the Phosphoserine intermediate.

The protein belongs to the APS kinase family.

The catalysed reaction is adenosine 5'-phosphosulfate + ATP = 3'-phosphoadenylyl sulfate + ADP + H(+). The protein operates within sulfur metabolism; hydrogen sulfide biosynthesis; sulfite from sulfate: step 2/3. Functionally, catalyzes the synthesis of activated sulfate. This is Adenylyl-sulfate kinase from Shewanella denitrificans (strain OS217 / ATCC BAA-1090 / DSM 15013).